The sequence spans 588 residues: Intracellular maltogenic amylase (588 aa).

Positions 149, 155, 174, and 176 each coordinate Ca(2+). 2 residues coordinate substrate: His-249 and Arg-325. Asp-327 acts as the Nucleophile in catalysis. Residue Glu-356 is the Proton donor of the active site. Substrate is bound by residues 422-423 (HD), Asp-467, and Arg-471.

The protein belongs to the glycosyl hydrolase 13 family. BbmA subfamily. Monomer or homodimer; in equilibrium. The cofactor is Ca(2+).

It localises to the cytoplasm. Its function is as follows. Hydrolyzes beta-cyclodextrin to maltose and glucose, soluble starch to maltose and glucose, and pullulan to panose with trace amounts of maltose and glucose. It is also able to hydrolyze acarbose. Can also exhibit a transglycosylation activity transferring glucose or maltose to another moiety of sugars by forming alpha-(1,6)- and alpha-(1,3)-glycosidic linkages upon the hydrolysis of substrate at concentrations of 5% or higher. The polypeptide is Intracellular maltogenic amylase (bbmA) (Bacillus subtilis (strain 168)).